The sequence spans 264 residues: tRNA pseudouridine synthase A (264 aa).

Asp51 acts as the Nucleophile in catalysis. Position 109 (Tyr109) interacts with substrate.

It belongs to the tRNA pseudouridine synthase TruA family. Homodimer.

The catalysed reaction is uridine(38/39/40) in tRNA = pseudouridine(38/39/40) in tRNA. Formation of pseudouridine at positions 38, 39 and 40 in the anticodon stem and loop of transfer RNAs. This chain is tRNA pseudouridine synthase A, found in Polaromonas sp. (strain JS666 / ATCC BAA-500).